Here is a 119-residue protein sequence, read N- to C-terminus: Bombesin (119 aa).

Residues 1-29 form the signal peptide; sequence MSAIPLNRILPLGFLFHLLIFSFISLSSC. The propeptide occupies 30–44; it reads MEFVEDPNNQGRISL. Met58 is subject to Methionine amide. Residues 62-119 constitute a propeptide that is removed on maturation; it reads SLQDTDFEEMESFAKRNVENMRAALLQEQNRAESERELRHAQLVVRNILEQYLKNMQN.

The protein belongs to the bombesin/neuromedin-B/ranatensin family. Localized to the cutaneous granular glands in the skin and the brain.

Its subcellular location is the secreted. Stimulates smooth muscle contraction. Role in induction of hypothermia, stimulation of DNA replication and release of many gastrointestinal hormones. This is Bombesin from Bombina orientalis (Oriental fire-bellied toad).